An 872-amino-acid polypeptide reads, in one-letter code: TATA box-binding protein-associated factor RNA polymerase I subunit B (872 aa).

The RRN7-type zinc-finger motif lies at 6–40 (ETMQLENMHCDVCEGTTFQEREGFYYCVECGTQKD). Zn(2+) contacts are provided by cysteine 15, cysteine 18, cysteine 32, and cysteine 35. The B-reader stretch occupies residues 41-72 (QIRAVDITAEDNFDDTAAGRYTARTIRQKKDT). The segment at 73-84 (EKEDEDDITSWE) is B-linker. The tract at residues 85 to 312 (FYNYVLRGFL…LPGNVAAKGK (228 aa)) is N-terminal cyclin fold. The tract at residues 187-206 (DASGYRSHGGASESEGEQSL) is disordered.

This sequence belongs to the RRN7/TAF1B family.

It is found in the nucleus. It localises to the nucleolus. Its function is as follows. Component of RNA polymerase I core factor complex that acts as a GTF2B/TFIIB-like factor and plays a key role in multiple steps during transcription initiation such as pre-initiation complex (PIC) assembly and postpolymerase recruitment events in polymerase I (Pol I) transcription. Binds rDNA promoters and plays a role in Pol I recruitment. This is TATA box-binding protein-associated factor RNA polymerase I subunit B from Drosophila melanogaster (Fruit fly).